Consider the following 275-residue polypeptide: Rhamnulose-1-phosphate aldolase (275 aa).

Glu-117 is a catalytic residue. Residues His-141, His-143, and His-212 each coordinate Zn(2+).

This sequence belongs to the aldolase class II family. RhaD subfamily. Homotetramer. Zn(2+) serves as cofactor.

The protein localises to the cytoplasm. The enzyme catalyses L-rhamnulose 1-phosphate = (S)-lactaldehyde + dihydroxyacetone phosphate. It functions in the pathway carbohydrate degradation; L-rhamnose degradation; glycerone phosphate from L-rhamnose: step 3/3. In terms of biological role, catalyzes the reversible cleavage of L-rhamnulose-1-phosphate to dihydroxyacetone phosphate (DHAP) and L-lactaldehyde. The sequence is that of Rhamnulose-1-phosphate aldolase from Salmonella heidelberg (strain SL476).